The sequence spans 278 residues: Small ribosomal subunit protein uS2 (278 aa).

N-acetylserine is present on Ser-2. The interval 258–278 (TNEGKTAADEWATGAQTQSNW) is disordered.

The protein belongs to the universal ribosomal protein uS2 family. In terms of assembly, component of the small ribosomal subunit. Mature ribosomes consist of a small (40S) and a large (60S) subunit. The 40S subunit contains about 33 different proteins and 1 molecule of RNA (18S). The 60S subunit contains about 49 different proteins and 3 molecules of RNA (28S, 5.8S and 5S). Interacts with rps-21.

It is found in the cytoplasm. Its function is as follows. Required for the assembly and/or stability of the 40S ribosomal subunit. Required for the processing of the 20S rRNA-precursor to mature 18S rRNA in a late step of the maturation of 40S ribosomal subunits. The protein is Small ribosomal subunit protein uS2 of Caenorhabditis briggsae.